The sequence spans 51 residues: Cytoplasmic FMR1-interacting protein 1 (51 aa).

The protein belongs to the CYFIP family. In terms of assembly, component of the WAVE1 complex composed of ABI2, CYFIP1 or CYFIP2, BRK1, NCKAP1 and WASF1/WAVE1. Within the complex, a heterodimer containing NCKAP1 and CYFIP1 interacts with a heterotrimer formed by WAVE1, ABI2 and BRK1. Component of the CYFIP1-EIF4E-FMR1 complex which is composed of CYFIP, EIF4E and FMR1. Interacts with FMR1 but does not bind to related proteins FXR1 or FXR2. Interaction with EIF4E stimulates FMR1 binding. Component of the WAVE2 complex composed of ABI1, CYFIP1/SRA1, NCKAP1/NAP1 (NCKAP1l/HEM1 in hematopoietic cells) and WASF2/WAVE2. Interacts with the active GTP-bound form of RAC1. Interacts through its C-terminus with the C-terminus of DPYSL2/CRMP2 which is necessary for DPYSL2-induced axon outgrowth. Interacts with NYAP1, NYAP2 and MYO16. Interacts with TMEM108 (via N-terminus); the interaction associates TMEM108 with the WAVE1 complex.

The protein resides in the cytoplasm. The protein localises to the perinuclear region. It is found in the cell projection. It localises to the lamellipodium. Its subcellular location is the ruffle. The protein resides in the synapse. The protein localises to the synaptosome. In terms of biological role, component of the CYFIP1-EIF4E-FMR1 complex which binds to the mRNA cap and mediates translational repression. In the CYFIP1-EIF4E-FMR1 complex this subunit is an adapter between EIF4E and FMR1. Promotes the translation repression activity of FMR1 in brain probably by mediating its association with EIF4E and mRNA. Regulates formation of membrane ruffles and lamellipodia. Plays a role in axon outgrowth. Binds to F-actin but not to RNA. Part of the WAVE complex that regulates actin filament reorganization via its interaction with the Arp2/3 complex. Actin remodeling activity is regulated by RAC1. Regulator of epithelial morphogenesis. As component of the WAVE1 complex, required for BDNF-NTRK2 endocytic trafficking and signaling from early endosomes. This Bos taurus (Bovine) protein is Cytoplasmic FMR1-interacting protein 1.